The sequence spans 540 residues: Terminase large subunit (540 aa).

The Mn(2+) site is built by aspartate 352, aspartate 424, and aspartate 523.

The protein belongs to the skunavirus terminase large subunit family. As to quaternary structure, interacts with the terminase small subunit; the active complex is probably heterooligomeric. The cofactor is Mn(2+). Requires Mg(2+) as cofactor.

The terminase large subunit acts as an ATP driven molecular motor necessary for viral DNA translocation into empty capsids and as an endonuclease that cuts the viral genome to initiate and to end a packaging reaction. The terminase lies at a unique vertex of the procapsid and is composed of two subunits, a small terminase subunit involved in viral DNA recognition (packaging sequence), and a large terminase subunit possessing endonucleolytic and ATPase activities. Both terminase subunits heterooligomerize and are docked on the portal protein to form the packaging machine. The terminase large subunit exhibits endonuclease activity and cleaves the viral genome concatemer. The chain is Terminase large subunit from Lactococcus lactis (Lactococcus lactis bacteriophage SK1).